Consider the following 110-residue polypeptide: Endoribonuclease SymE (110 aa).

Residues 29-74 (SRYPEYTRIPAITLKGQWLEDAGFTTGTQVDVRVMNGCIVLTAQQP) enclose the SpoVT-AbrB domain.

Belongs to the SymE family.

The protein resides in the cytoplasm. Functionally, involved in the degradation and recycling of damaged RNA. It is itself a target for degradation by the ATP-dependent protease Lon. The polypeptide is Endoribonuclease SymE (Salmonella paratyphi C (strain RKS4594)).